Reading from the N-terminus, the 1603-residue chain is Gag-Pol polyprotein (1603 aa).

A compositionally biased stretch (basic and acidic residues) spans 128-141 (VGETTVQRDAKMAP). The tract at residues 128–150 (VGETTVQRDAKMAPEETATPKTV) is disordered. A PPXY motif motif is present at residues 172–175 (PPPY). The LYPX(n)L motif motif lies at 180–184 (LYPSL). The disordered stretch occupies residues 181–215 (YPSLAGVGEQQGQGGDTPRGAEQPRAEPGHAGLAP). A Nuclear export signal motif is present at residues 219-229 (LTDWARIREEL). 2 CCHC-type zinc fingers span residues 507 to 524 (RLCY…QCPK) and 533 to 550 (ERCQ…QCRR). The interval 544 to 571 (NAKQCRRRDSNQGQRPGRGLSSGPWPVS) is disordered. One can recognise a Peptidase A2 domain in the interval 609 to 690 (ITALLDSGAD…VRGSILGRDC (82 aa)). The active-site For protease activity; shared with dimeric partner is D614. Residues 750–938 (LQLGHIEPSL…PGVQYLGYKL (189 aa)) form the Reverse transcriptase domain. Residues D815, D890, D891, D1158, E1192, D1213, and D1272 each contribute to the Mg(2+) site. Residues 1149–1280 (PVPGPTVFTD…ADSQATFQAY (132 aa)) form the RNase H type-1 domain. Residues 1280–1321 (YPLREAKDLHTTLHIGPRALSKACNISMQQAREVVQTCPHCN) form an Integrase-type zinc finger. Residues H1289, H1293, C1317, and C1320 each contribute to the Zn(2+) site. In terms of domain architecture, Integrase catalytic spans 1333–1496 (RGLGPLQIWQ…TPVQKHWRPT (164 aa)). Residues D1344, D1401, and E1437 each contribute to the Mg(2+) site. A DNA-binding region (integrase-type) is located at residues 1502–1550 (PPVKIRIETGEWEKGWNVLVWGRGYAAVKNRDTDKVIWVPSRKVKPDIT). Residues 1548–1567 (DITQKDEVTKKDEASPLFAG) form an involved in homooctamerization region. Positions 1549–1561 (ITQKDEVTKKDEA) are enriched in basic and acidic residues. Positions 1549 to 1603 (ITQKDEVTKKDEASPLFAGSSDWIPWGDEQEGLQEEAASNKQEGPGEDTLAANES) are disordered.

In terms of assembly, active as a homodimer. Homodimer. Homomultimer. Homohexamer. As to quaternary structure, homodimer; further associates as a homooctamer. In terms of assembly, heterodimer of alpha and beta subunits. Three forms of RT exist: alpha-alpha (alpha-Pol), beta-beta (beta-Pol), and alpha-beta, with the major form being the heterodimer. Both the polymerase and RNase H active sites are located in the alpha subunit of heterodimeric RT alpha-beta. The cofactor is Mg(2+). Requires Mn(2+) as cofactor. Specific enzymatic cleavages in vivo yield mature proteins. Post-translationally, capsid protein p27: The cleavage at the C-terminus is slowly trimmed by the viral protease, sometimes being cut internally thereby generating the short version of the capsid protein and a capsid protein C-terminally extended by 3 amino acids in a ratio of 2:1.

The protein localises to the virion. It carries out the reaction DNA(n) + a 2'-deoxyribonucleoside 5'-triphosphate = DNA(n+1) + diphosphate. The enzyme catalyses Endonucleolytic cleavage to 5'-phosphomonoester.. Its function is as follows. Capsid protein p27: Self-associates to form the irregular polyhedron core composed of hexamers and pentamers, that encapsulates the genomic RNA-nucleocapsid complex. Assembles as a tube in vitro. Binds to inositol hexakisphosphate (IP6), which allows the assembly of the polyhedral capsid. Functionally, plays a role in the oligomerization of the Gag polyprotein and in the stabilization of the immature particle. Essential layering element during tube assembly. Allows the cooperative binging of Gag to the host plasma membrane. In terms of biological role, binds strongly to viral nucleic acids and promotes their packaging. Plays a role in the maturation-stabilization of the viral dimeric RNA via highly structured zinc-binding motifs. The aspartyl protease mediates proteolytic cleavages of Gag and Gag-Pol polyproteins during or shortly after the release of the virion from the plasma membrane. Cleavages take place as an ordered, step-wise cascade to yield mature proteins. This process is called maturation. Displays maximal activity during the budding process just prior to particle release from the cell. Its function is as follows. Catalyzes viral DNA integration into the host chromosome, by performing a series of DNA cutting and joining reactions. This recombination event is an essential step in the viral replication cycle. Has a strong preference for using the 3'-OH at the viral DNA end as a nucleophile. The protein is Gag-Pol polyprotein (gag-pol) of Rous sarcoma virus subgroup B (strain Schmidt-Ruppin) (RSV-SR-B).